The chain runs to 145 residues: Basic phospholipase A2 S2-22 (145 aa).

An N-terminal signal peptide occupies residues 1–19; it reads MYPAHLLVLLAVCVSLLGA. Residues 20–27 constitute a propeptide that is removed on maturation; that stretch reads SDIPPQPL. Cystine bridges form between C38–C99, C54–C144, C56–C72, C71–C127, C78–C120, C88–C113, and C106–C118. Residues Y55, G57, and G59 each contribute to the Ca(2+) site. H75 is an active-site residue. Position 76 (D76) interacts with Ca(2+). D121 is an active-site residue.

Belongs to the phospholipase A2 family. Group I subfamily. D49 sub-subfamily. Ca(2+) serves as cofactor. In terms of tissue distribution, expressed by the venom gland.

The protein resides in the secreted. The enzyme catalyses a 1,2-diacyl-sn-glycero-3-phosphocholine + H2O = a 1-acyl-sn-glycero-3-phosphocholine + a fatty acid + H(+). Snake venom phospholipase A2 (PLA2) that inhibits collagen-induced platelet aggregation. PLA2 catalyzes the calcium-dependent hydrolysis of the 2-acyl groups in 3-sn-phosphoglycerides. The protein is Basic phospholipase A2 S2-22 of Austrelaps superbus (Lowland copperhead snake).